The chain runs to 702 residues: Elongation factor G (702 aa).

Residues 8-290 form the tr-type G domain; it reads HRVRNIGIAA…AVAMYLPAPT (283 aa). GTP is bound by residues 17-24, 87-91, and 141-144; these read AHIDAGKT, DTPGH, and NKMD.

It belongs to the TRAFAC class translation factor GTPase superfamily. Classic translation factor GTPase family. EF-G/EF-2 subfamily.

It is found in the cytoplasm. Catalyzes the GTP-dependent ribosomal translocation step during translation elongation. During this step, the ribosome changes from the pre-translocational (PRE) to the post-translocational (POST) state as the newly formed A-site-bound peptidyl-tRNA and P-site-bound deacylated tRNA move to the P and E sites, respectively. Catalyzes the coordinated movement of the two tRNA molecules, the mRNA and conformational changes in the ribosome. In Aliarcobacter butzleri (strain RM4018) (Arcobacter butzleri), this protein is Elongation factor G.